The sequence spans 360 residues: Peptide chain release factor 1 (360 aa).

Glutamine 235 carries the N5-methylglutamine modification.

It belongs to the prokaryotic/mitochondrial release factor family. Post-translationally, methylated by PrmC. Methylation increases the termination efficiency of RF1.

Its subcellular location is the cytoplasm. Its function is as follows. Peptide chain release factor 1 directs the termination of translation in response to the peptide chain termination codons UAG and UAA. This chain is Peptide chain release factor 1, found in Paraburkholderia phymatum (strain DSM 17167 / CIP 108236 / LMG 21445 / STM815) (Burkholderia phymatum).